The primary structure comprises 90 residues: Trp-8 progonadoliberin (90 aa).

Positions 1-24 (MSRHVTVVLLLAVVLLLSSHMSHG) are cleaved as a signal peptide. The residue at position 25 (Q25) is a Pyrrolidone carboxylic acid. G34 is subject to Glycine amide.

This sequence belongs to the GnRH family. Expressed in forebrain but not in testis, ovary, kidney and liver.

The protein resides in the secreted. In terms of biological role, stimulates the secretion of gonadotropins. The chain is Trp-8 progonadoliberin from Rana dybowskii (Dybovsky's frog).